Here is a 141-residue protein sequence, read N- to C-terminus: Ribonuclease P protein component (141 aa).

Basic and acidic residues predominate over residues 114 to 134 (RRIKAKGERRGDGKRRTERPE). A disordered region spans residues 114–141 (RRIKAKGERRGDGKRRTERPESGPVNGK).

This sequence belongs to the RnpA family. In terms of assembly, consists of a catalytic RNA component (M1 or rnpB) and a protein subunit.

The catalysed reaction is Endonucleolytic cleavage of RNA, removing 5'-extranucleotides from tRNA precursor.. RNaseP catalyzes the removal of the 5'-leader sequence from pre-tRNA to produce the mature 5'-terminus. It can also cleave other RNA substrates such as 4.5S RNA. The protein component plays an auxiliary but essential role in vivo by binding to the 5'-leader sequence and broadening the substrate specificity of the ribozyme. This Brucella anthropi (strain ATCC 49188 / DSM 6882 / CCUG 24695 / JCM 21032 / LMG 3331 / NBRC 15819 / NCTC 12168 / Alc 37) (Ochrobactrum anthropi) protein is Ribonuclease P protein component.